A 264-amino-acid chain; its full sequence is Diphthine synthase (264 aa).

S-adenosyl-L-methionine-binding positions include L10, D87, V90, 115–116, L166, A209, and H234; that span reads SI.

It belongs to the diphthine synthase family. In terms of assembly, homodimer.

The catalysed reaction is 2-[(3S)-amino-3-carboxypropyl]-L-histidyl-[translation elongation factor 2] + 3 S-adenosyl-L-methionine = diphthine-[translation elongation factor 2] + 3 S-adenosyl-L-homocysteine + 3 H(+). It functions in the pathway protein modification; peptidyl-diphthamide biosynthesis. Its function is as follows. S-adenosyl-L-methionine-dependent methyltransferase that catalyzes the trimethylation of the amino group of the modified target histidine residue in translation elongation factor 2 (EF-2), to form an intermediate called diphthine. The three successive methylation reactions represent the second step of diphthamide biosynthesis. The chain is Diphthine synthase from Thermococcus gammatolerans (strain DSM 15229 / JCM 11827 / EJ3).